We begin with the raw amino-acid sequence, 325 residues long: Ribosomal RNA small subunit methyltransferase H (325 aa).

Residues 32 to 34 (GGH), D52, F79, D100, and Q107 contribute to the S-adenosyl-L-methionine site.

The protein belongs to the methyltransferase superfamily. RsmH family.

The protein resides in the cytoplasm. The enzyme catalyses cytidine(1402) in 16S rRNA + S-adenosyl-L-methionine = N(4)-methylcytidine(1402) in 16S rRNA + S-adenosyl-L-homocysteine + H(+). Specifically methylates the N4 position of cytidine in position 1402 (C1402) of 16S rRNA. The sequence is that of Ribosomal RNA small subunit methyltransferase H from Oceanobacillus iheyensis (strain DSM 14371 / CIP 107618 / JCM 11309 / KCTC 3954 / HTE831).